The chain runs to 181 residues: Adenine phosphoribosyltransferase (181 aa).

Belongs to the purine/pyrimidine phosphoribosyltransferase family. In terms of assembly, homodimer.

The protein localises to the cytoplasm. It catalyses the reaction AMP + diphosphate = 5-phospho-alpha-D-ribose 1-diphosphate + adenine. The protein operates within purine metabolism; AMP biosynthesis via salvage pathway; AMP from adenine: step 1/1. Catalyzes a salvage reaction resulting in the formation of AMP, that is energically less costly than de novo synthesis. The sequence is that of Adenine phosphoribosyltransferase from Methylobacterium nodulans (strain LMG 21967 / CNCM I-2342 / ORS 2060).